The sequence spans 1450 residues: DNA-directed RNA polymerase RPB1 homolog (1450 aa).

Belongs to the RNA polymerase beta' chain family. As to quaternary structure, part of the viral DNA-directed RNA polymerase that consists of 8 polII-like subunits (RPB1, RPB2, RPB3, RPB5, RPB6, RPB7, RPB9, RPB10), a capping enzyme and a termination factor.

Its subcellular location is the virion. It catalyses the reaction RNA(n) + a ribonucleoside 5'-triphosphate = RNA(n+1) + diphosphate. Functionally, catalytic component of the DNA-directed RNA polymerase (RNAP) that catalyzes the transcription in the cytoplasm of viral DNA into RNA using the four ribonucleoside triphosphates as substrates. Forms the polymerase active center together with RPB2. Part of the core element with the central large cleft, the clamp element that moves to open and close the cleft and the jaws that are thought to grab the incoming DNA template. The sequence is that of DNA-directed RNA polymerase RPB1 homolog from African swine fever virus (isolate Tick/South Africa/Pretoriuskop Pr4/1996) (ASFV).